The following is a 92-amino-acid chain: Small ribosomal subunit protein uS19 (92 aa).

The protein belongs to the universal ribosomal protein uS19 family.

Its function is as follows. Protein S19 forms a complex with S13 that binds strongly to the 16S ribosomal RNA. In Agrobacterium fabrum (strain C58 / ATCC 33970) (Agrobacterium tumefaciens (strain C58)), this protein is Small ribosomal subunit protein uS19.